A 402-amino-acid polypeptide reads, in one-letter code: CCA-adding enzyme (402 aa).

Glycine 32 and arginine 35 together coordinate ATP. 2 residues coordinate CTP: glycine 32 and arginine 35. Positions 45 and 47 each coordinate Mg(2+). Arginine 116, aspartate 159, arginine 162, arginine 165, and arginine 168 together coordinate ATP. Positions 116, 159, 162, 165, and 168 each coordinate CTP.

Belongs to the tRNA nucleotidyltransferase/poly(A) polymerase family. Bacterial CCA-adding enzyme type 3 subfamily. As to quaternary structure, homodimer. Requires Mg(2+) as cofactor.

It catalyses the reaction a tRNA precursor + 2 CTP + ATP = a tRNA with a 3' CCA end + 3 diphosphate. The catalysed reaction is a tRNA with a 3' CCA end + 2 CTP + ATP = a tRNA with a 3' CCACCA end + 3 diphosphate. In terms of biological role, catalyzes the addition and repair of the essential 3'-terminal CCA sequence in tRNAs without using a nucleic acid template. Adds these three nucleotides in the order of C, C, and A to the tRNA nucleotide-73, using CTP and ATP as substrates and producing inorganic pyrophosphate. tRNA 3'-terminal CCA addition is required both for tRNA processing and repair. Also involved in tRNA surveillance by mediating tandem CCA addition to generate a CCACCA at the 3' terminus of unstable tRNAs. While stable tRNAs receive only 3'-terminal CCA, unstable tRNAs are marked with CCACCA and rapidly degraded. The protein is CCA-adding enzyme of Streptococcus pyogenes serotype M2 (strain MGAS10270).